A 902-amino-acid chain; its full sequence is Glutamate receptor 4 (902 aa).

Positions 1–20 (MRIICRQIVLLFSGFWGLAM) are cleaved as a signal peptide. Topologically, residues 22 to 544 (AFPSSVQIGG…GVFSFLDPLA (523 aa)) are extracellular. N-linked (GlcNAc...) asparagine glycans are attached at residues asparagine 52, asparagine 56, asparagine 258, asparagine 371, asparagine 407, and asparagine 414. Cysteine 84 and cysteine 331 are joined by a disulfide. The L-glutamate site is built by proline 500, threonine 502, and arginine 507. A helical membrane pass occupies residues 545-565 (YEIWMCIVFAYIGVSVVLFLV). Topologically, residues 566–592 (SRFSPYEWHTEEPEDGKEGPSDQPPNE) are cytoplasmic. An intramembrane region (helical; Pore-forming) is located at residues 593 to 608 (FGIFNSLWFSLGAFMQ). Residues 609 to 611 (QGC) lie within the membrane without spanning it. Cysteine 611 is lipidated: S-palmitoyl cysteine. Residues 612-617 (DISPRS) lie on the Cytoplasmic side of the membrane. Residues 618–638 (LSGRIVGGVWWFFTLIIISSY) form a helical membrane-spanning segment. Topologically, residues 639–813 (TANLAAFLTV…DKTSALSLSN (175 aa)) are extracellular. Residues serine 676, threonine 677, and glutamate 727 each contribute to the L-glutamate site. Residues cysteine 740 and cysteine 795 are joined by a disulfide bond. A helical membrane pass occupies residues 814-834 (VAGVFYILVGGLGLAMLVALI). Topologically, residues 835-902 (EFCYKSRAEA…GLAVIASDLP (68 aa)) are cytoplasmic. Cysteine 837 carries the S-palmitoyl cysteine lipid modification. The residue at position 862 (serine 862) is a Phosphoserine.

It belongs to the glutamate-gated ion channel (TC 1.A.10.1) family. GRIA4 subfamily. In terms of assembly, homotetramer or heterotetramer of pore-forming glutamate receptor subunits. Tetramers may be formed by the dimerization of dimers. Interacts with EPB41L1 via its C-terminus. Isoform 3 interacts with PICK1. Found in a complex with GRIA1, GRIA2, GRIA3, CNIH2, CNIH3, CACNG2, CACNG3, CACNG4, CACNG5, CACNG7 and CACNG8. Interacts with CACNG5 and PRKCG. Found in a complex with GRIA1, GRIA2, GRIA3, DLG4, CACNG8 and CNIH2. Post-translationally, palmitoylated. Depalmitoylated upon L-glutamate stimulation. ZDHHC3/GODZ specifically palmitoylates Cys-611, which leads to Golgi retention and decreased cell surface expression. In contrast, Cys-837 palmitoylation does not affect cell surface expression but regulates stimulation-dependent endocytosis. Phosphorylated at Ser-862 by PRKCG; phosphorylation increases plasma membrane-associated GRI4 expression.

It localises to the cell membrane. Its subcellular location is the postsynaptic cell membrane. It is found in the cell projection. The protein resides in the dendrite. It catalyses the reaction Ca(2+)(in) = Ca(2+)(out). The catalysed reaction is Na(+)(in) = Na(+)(out). The enzyme catalyses Mg(2+)(in) = Mg(2+)(out). Its function is as follows. Ionotropic glutamate receptor that functions as a ligand-gated cation channel, gated by L-glutamate and glutamatergic agonists such as alpha-amino-3-hydroxy-5-methyl-4-isoxazolepropionic acid (AMPA), quisqualic acid, and kainic acid. L-glutamate acts as an excitatory neurotransmitter at many synapses in the central nervous system and plays an important role in fast excitatory synaptic transmission. Binding of the excitatory neurotransmitter L-glutamate induces a conformation change, leading to the opening of the cation channel, and thereby converts the chemical signal to an electrical impulse upon entry of monovalent and divalent cations such as sodium and calcium. The receptor then desensitizes rapidly and enters a transient inactive state, characterized by the presence of bound agonist. In the presence of CACNG8, shows resensitization which is characterized by a delayed accumulation of current flux upon continued application of L-glutamate. This is Glutamate receptor 4 from Mus musculus (Mouse).